The primary structure comprises 690 residues: Potassium-transporting ATPase ATP-binding subunit (690 aa).

A run of 4 helical transmembrane segments spans residues 49 to 69, 72 to 92, 229 to 249, and 253 to 273; these read SPVM…CFVP, AVPT…VLFA, VALD…VVTL, and ALFA…VTLI. D317 (4-aspartylphosphate intermediate) is an active-site residue. Residues D354, E358, 385–392, and K403 contribute to the ATP site; that span reads FSAETRLS. The Mg(2+) site is built by D526 and D530. Helical transmembrane passes span 596–616, 624–644, and 662–682; these read FAIL…LNVM, AILS…PLAL, and LLIY…AIDL.

The protein belongs to the cation transport ATPase (P-type) (TC 3.A.3) family. Type IA subfamily. The system is composed of three essential subunits: KdpA, KdpB and KdpC.

It is found in the cell inner membrane. The enzyme catalyses K(+)(out) + ATP + H2O = K(+)(in) + ADP + phosphate + H(+). Functionally, part of the high-affinity ATP-driven potassium transport (or Kdp) system, which catalyzes the hydrolysis of ATP coupled with the electrogenic transport of potassium into the cytoplasm. This subunit is responsible for energy coupling to the transport system and for the release of the potassium ions to the cytoplasm. The polypeptide is Potassium-transporting ATPase ATP-binding subunit (Pseudomonas aeruginosa (strain ATCC 15692 / DSM 22644 / CIP 104116 / JCM 14847 / LMG 12228 / 1C / PRS 101 / PAO1)).